A 649-amino-acid chain; its full sequence is MISAAWSIFLIGTKIGLFLQVAPLSVMAKSCPSVCRCDAGFIYCNDRFLTSIPTGIPEDATTLYLQNNQINNAGIPSDLKNLLKVERIYLYHNSLDEFPTNLPKYVKELHLQENNIRTITYDSLSKIPYLEELHLDDNSVSAVSIEEGAFRDSNYLRLLFLSRNHLSTIPWGLPRTIEELRLDDNRISTISSPSLQGLTSLKRLVLDGNLLNNHGLGDKVFFNLVNLTELSLVRNSLTAAPVNLPGTNLRKLYLQDNHINRVPPNAFSYLRQLYRLDMSNNNLSNLPQGIFDDLDNITQLILRNNPWYCGCKMKWVRDWLQSLPVKVNVRGLMCQAPEKVRGMAIKDLNAELFDCKDSGIVSTIQITTAIPNTVYPAQGQWPAPVTKQPDIKNPKLTKDHQTTGSPSRKTITITVKSVTSDTIHISWKLALPMTALRLSWLKLGHSPAFGSITETIVTGERSEYLVTALEPDSPYKVCMVPMETSNLYLFDETPVCIETETAPLRMYNPTTTLNREQEKEPYKNPNLPLAAIIGGAVALVTIALLALVCWYVHRNGSLFSRNCAYSKGRRRKDDYAEAGTKKDNSILEIRETSFQMLPISNEPISKEEFVIHTIFPPNGMNLYKNNHSESSSNRSYRDSGIPDSDHSHS.

The signal sequence occupies residues 1 to 28; it reads MISAAWSIFLIGTKIGLFLQVAPLSVMA. One can recognise an LRRNT domain in the interval 29 to 58; that stretch reads KSCPSVCRCDAGFIYCNDRFLTSIPTGIPE. At 29-528 the chain is on the extracellular side; it reads KSCPSVCRCD…KEPYKNPNLP (500 aa). 2 disulfides stabilise this stretch: cysteine 31–cysteine 37 and cysteine 35–cysteine 44. Positions 38-67 are interaction with ADGRL3; sequence DAGFIYCNDRFLTSIPTGIPEDATTLYLQN. LRR repeat units lie at residues 59 to 80, 84 to 104, 105 to 126, 129 to 150, 155 to 175, 176 to 197, 200 to 220, 226 to 247, 248 to 269, and 272 to 293; these read DATT…SDLK, KVER…NLPK, YVKE…SLSK, YLEE…EGAF, YLRL…GLPR, TIEE…SLQG, SLKR…GDKV, NLTE…LPGT, NLRK…AFSY, and QLYR…IFDD. N-linked (GlcNAc...) asparagine glycosylation occurs at asparagine 226. Asparagine 282 and asparagine 296 each carry an N-linked (GlcNAc...) asparagine glycan. In terms of domain architecture, LRRCT spans 305–357; it reads NPWYCGCKMKWVRDWLQSLPVKVNVRGLMCQAPEKVRGMAIKDLNAELFDCKD. Cysteine 309 and cysteine 334 are joined by a disulfide. Residues 387 to 407 are disordered; that stretch reads KQPDIKNPKLTKDHQTTGSPS. Residues 389-401 show a composition bias toward basic and acidic residues; that stretch reads PDIKNPKLTKDHQ. Residues 409–504 form the Fibronectin type-III domain; it reads KTITITVKSV…VCIETETAPL (96 aa). Residues 529 to 549 form a helical membrane-spanning segment; sequence LAAIIGGAVALVTIALLALVC. Residues 550–649 lie on the Cytoplasmic side of the membrane; the sequence is WYVHRNGSLF…GIPDSDHSHS (100 aa). The tract at residues 622-649 is disordered; it reads LYKNNHSESSSNRSYRDSGIPDSDHSHS.

In terms of assembly, monomer and homodimer. Self-associates (via leucine-rich repeats), giving rise to homooligomers. Interacts with FGFR1. Interacts (via extracellular domain) with ADGRL1/LPHN1 and LPHN2 (via olfactomedin-like domain). Interacts (via extracellular domain) with ADGRL3 (via olfactomedin-like domain); the interaction is direct. Interacts (via extracellular domain) with UNC5B and UNC5D (via extracellular domain); the interaction is direct. Identified in complexes composed of FLRT3, ADGRL3 and UNC5B, respectively FLRT3, ADGRL3 and UNC5D. May also interact (via extracellular domain) with UNC5A and UNC5C. Interacts (via cytoplasmic domain) with ROBO1. N-glycosylated. In terms of processing, proteolytic cleavage in the juxtamembrane region gives rise to a soluble ectodomain. Cleavage is probably effected by a metalloprotease. Expressed in kidney, brain, pancreas, skeletal muscle, lung, liver, placenta, and heart.

It localises to the cell membrane. Its subcellular location is the presynaptic cell membrane. The protein resides in the endoplasmic reticulum membrane. It is found in the cell junction. The protein localises to the focal adhesion. It localises to the secreted. Its subcellular location is the cell projection. The protein resides in the axon. It is found in the growth cone membrane. Its function is as follows. Functions in cell-cell adhesion, cell migration and axon guidance, exerting an attractive or repulsive role depending on its interaction partners. Plays a role in the spatial organization of brain neurons. Plays a role in vascular development in the retina. Plays a role in cell-cell adhesion via its interaction with ADGRL3 and probably also other latrophilins that are expressed at the surface of adjacent cells. Interaction with the intracellular domain of ROBO1 mediates axon attraction towards cells expressing NTN1. Mediates axon growth cone collapse and plays a repulsive role in neuron guidance via its interaction with UNC5B, and possibly also other UNC-5 family members. Promotes neurite outgrowth (in vitro). Mediates cell-cell contacts that promote an increase both in neurite number and in neurite length. Plays a role in the regulation of the density of glutamaergic synapses. Plays a role in fibroblast growth factor-mediated signaling cascades. Required for normal morphogenesis during embryonic development, but not for normal embryonic patterning. Required for normal ventral closure, headfold fusion and definitive endoderm migration during embryonic development. Required for the formation of a normal basement membrane and the maintenance of a normal anterior visceral endoderm during embryonic development. This Homo sapiens (Human) protein is Leucine-rich repeat transmembrane protein FLRT3 (FLRT3).